The sequence spans 307 residues: Ornithine carbamoyltransferase (307 aa).

Residues 50–53 (STRT), Gln77, Arg101, and 128–131 (HPCQ) contribute to the carbamoyl phosphate site. Residues Asn160, Asp224, and 228–229 (SM) contribute to the L-ornithine site. Carbamoyl phosphate is bound by residues 264 to 265 (CL) and Arg292.

It belongs to the aspartate/ornithine carbamoyltransferase superfamily. OTCase family.

It localises to the cytoplasm. It carries out the reaction carbamoyl phosphate + L-ornithine = L-citrulline + phosphate + H(+). The protein operates within amino-acid biosynthesis; L-arginine biosynthesis; L-arginine from L-ornithine and carbamoyl phosphate: step 1/3. Its activity is regulated as follows. Inhibited by arginine, norvaline. Its function is as follows. Reversibly catalyzes the transfer of the carbamoyl group from carbamoyl phosphate (CP) to the N(epsilon) atom of ornithine (ORN) to produce L-citrulline, which is a substrate for argininosuccinate synthetase, the enzyme involved in the final step in arginine biosynthesis. The chain is Ornithine carbamoyltransferase from Mycolicibacterium smegmatis (strain ATCC 700084 / mc(2)155) (Mycobacterium smegmatis).